A 193-amino-acid polypeptide reads, in one-letter code: MSTTYLLGLAVALAMDAFAVAIAVGIGLKRIRFRQAFRLSYHFGLFQALMPIIGWALGTGIRQFTQSYAHWIAFTLLALVGANMIREALSDDEEEPGEKDPTRGLRLIILSLATSIDALAVGLSLSMLEVSIWYPALIIGLVAGAFTLFGMLLGQRIAKLQRFSSYAEVLGGIILWAIGLNILYDNGVFSPFL.

The next 6 membrane-spanning stretches (helical) occupy residues 6 to 26 (LLGL…AVGI), 41 to 61 (YHFG…GTGI), 65 to 85 (TQSY…ANMI), 107 to 127 (LIIL…SLSM), 132 to 152 (IWYP…FGML), and 169 to 189 (VLGG…NGVF).

This sequence belongs to the MntP (TC 9.B.29) family.

It localises to the cell inner membrane. Probably functions as a manganese efflux pump. The chain is Putative manganese efflux pump MntP from Desulfotalea psychrophila (strain LSv54 / DSM 12343).